We begin with the raw amino-acid sequence, 74 residues long: Small ribosomal subunit protein bS18 (74 aa).

The protein belongs to the bacterial ribosomal protein bS18 family. Part of the 30S ribosomal subunit. Forms a tight heterodimer with protein bS6.

In terms of biological role, binds as a heterodimer with protein bS6 to the central domain of the 16S rRNA, where it helps stabilize the platform of the 30S subunit. This Alkalilimnicola ehrlichii (strain ATCC BAA-1101 / DSM 17681 / MLHE-1) protein is Small ribosomal subunit protein bS18.